The chain runs to 221 residues: Enolase-phosphatase E1 (221 aa).

This sequence belongs to the HAD-like hydrolase superfamily. MasA/MtnC family. Monomer. Mg(2+) is required as a cofactor.

It carries out the reaction 5-methylsulfanyl-2,3-dioxopentyl phosphate + H2O = 1,2-dihydroxy-5-(methylsulfanyl)pent-1-en-3-one + phosphate. It functions in the pathway amino-acid biosynthesis; L-methionine biosynthesis via salvage pathway; L-methionine from S-methyl-5-thio-alpha-D-ribose 1-phosphate: step 3/6. The protein operates within amino-acid biosynthesis; L-methionine biosynthesis via salvage pathway; L-methionine from S-methyl-5-thio-alpha-D-ribose 1-phosphate: step 4/6. In terms of biological role, bifunctional enzyme that catalyzes the enolization of 2,3-diketo-5-methylthiopentyl-1-phosphate (DK-MTP-1-P) into the intermediate 2-hydroxy-3-keto-5-methylthiopentenyl-1-phosphate (HK-MTPenyl-1-P), which is then dephosphorylated to form the acireductone 1,2-dihydroxy-3-keto-5-methylthiopentene (DHK-MTPene). This is Enolase-phosphatase E1 from Xanthobacter autotrophicus (strain ATCC BAA-1158 / Py2).